Here is a 347-residue protein sequence, read N- to C-terminus: Oxygen sensor histidine kinase NreB (347 aa).

Residues C59, C62, C74, and C77 each coordinate [4Fe-4S] cluster. In terms of domain architecture, Histidine kinase spans 153-347; sequence RISRELHDGI…IVTLEVPITD (195 aa). H159 is subject to Phosphohistidine; by autocatalysis.

[4Fe-4S] cluster is required as a cofactor. Post-translationally, autophosphorylated.

The protein localises to the cytoplasm. It carries out the reaction ATP + protein L-histidine = ADP + protein N-phospho-L-histidine.. With respect to regulation, activated by cysteine desulfurase, Fe(2+) ions and cysteine and inhibited by oxygen and ADP. Functionally, member of the two-component regulatory system NreB/NreC involved in the control of dissimilatory nitrate/nitrite reduction in response to oxygen. NreB functions as a direct oxygen sensor histidine kinase which is autophosphorylated, in the absence of oxygen, probably at the conserved histidine residue, and transfers its phosphate group probably to a conserved aspartate residue of NreC. NreB/NreC activates the expression of the nitrate (narGHJI) and nitrite (nir) reductase operons, as well as the putative nitrate transporter gene narT. This chain is Oxygen sensor histidine kinase NreB (nreB), found in Staphylococcus carnosus (strain TM300).